Reading from the N-terminus, the 158-residue chain is Single-stranded DNA-binding protein 2 (158 aa).

Residues methionine 1–leucine 107 form the SSB domain. The disordered stretch occupies residues arginine 109–threonine 158.

In terms of assembly, homotetramer.

The sequence is that of Single-stranded DNA-binding protein 2 (ssb2) from Streptomyces avermitilis (strain ATCC 31267 / DSM 46492 / JCM 5070 / NBRC 14893 / NCIMB 12804 / NRRL 8165 / MA-4680).